The sequence spans 300 residues: MTDSIPHIPVLVKESLSLFRDRNPVVFCDVTVGAGGHAEAFLTEFPSIERYDGSDRDLSALALSENRLLPFKDRVRLRHASFEEVDTLTSDGTYDGVLADLGVSSMQLNNLERGFSFQGEDHPLDMRMDTSRGMTASEVLNSLREEEIGEIFRNYGEEPLWRSAAAAVVHFRKKKKILTVKDLKDATSGVFPSYRLRKKIHPLTLIFQALRIYVNQEGAQLKVLLDSAFRWLRPGGRLAVISFCSLDDRPVKWAFREAEARGLGKILTKKVIMPSYEETRMNPRSRSAKLRCFEKSFEDK.

Residues Gly35–His37, Asp55, Phe82, Asp100, and Gln107 contribute to the S-adenosyl-L-methionine site.

It belongs to the methyltransferase superfamily. RsmH family.

The protein localises to the cytoplasm. It carries out the reaction cytidine(1402) in 16S rRNA + S-adenosyl-L-methionine = N(4)-methylcytidine(1402) in 16S rRNA + S-adenosyl-L-homocysteine + H(+). Functionally, specifically methylates the N4 position of cytidine in position 1402 (C1402) of 16S rRNA. This chain is Ribosomal RNA small subunit methyltransferase H, found in Chlamydia trachomatis serovar A (strain ATCC VR-571B / DSM 19440 / HAR-13).